The chain runs to 378 residues: tRNA-specific 2-thiouridylase MnmA (378 aa).

ATP contacts are provided by residues 6-13 (AMSGGVDS) and leucine 32. Catalysis depends on cysteine 101, which acts as the Nucleophile. A disulfide bond links cysteine 101 and cysteine 199. Glycine 125 lines the ATP pocket. The interval 148-150 (KDQ) is interaction with tRNA. Cysteine 199 (cysteine persulfide intermediate) is an active-site residue.

The protein belongs to the MnmA/TRMU family.

The protein resides in the cytoplasm. It catalyses the reaction S-sulfanyl-L-cysteinyl-[protein] + uridine(34) in tRNA + AH2 + ATP = 2-thiouridine(34) in tRNA + L-cysteinyl-[protein] + A + AMP + diphosphate + H(+). Functionally, catalyzes the 2-thiolation of uridine at the wobble position (U34) of tRNA, leading to the formation of s(2)U34. In Renibacterium salmoninarum (strain ATCC 33209 / DSM 20767 / JCM 11484 / NBRC 15589 / NCIMB 2235), this protein is tRNA-specific 2-thiouridylase MnmA.